The primary structure comprises 864 residues: Leucine--tRNA ligase (864 aa).

The short motif at 42 to 52 is the 'HIGH' region element; the sequence is PYPSGKLHMGH. The 'KMSKS' region signature appears at 624–628; sequence KMSKS. K627 provides a ligand contact to ATP.

This sequence belongs to the class-I aminoacyl-tRNA synthetase family.

The protein resides in the cytoplasm. It carries out the reaction tRNA(Leu) + L-leucine + ATP = L-leucyl-tRNA(Leu) + AMP + diphosphate. The sequence is that of Leucine--tRNA ligase from Paraburkholderia phymatum (strain DSM 17167 / CIP 108236 / LMG 21445 / STM815) (Burkholderia phymatum).